We begin with the raw amino-acid sequence, 1062 residues long: 3-hydroxy-3-methylglutaryl-coenzyme A reductase 2 (1062 aa).

Residues 1-34 (MAPTNTKDSDTPGWLHRHGTSVLGSVARQACKQP) lie on the Cytoplasmic side of the membrane. Residues 35–55 (IYTLVITALLATMTYTSLLEG) form a helical membrane-spanning segment. The Lumenal segment spans residues 56 to 230 (SLYNANLTRL…SFVGLIKHAQ (175 aa)). N61 carries N-linked (GlcNAc...) asparagine glycosylation. A helical transmembrane segment spans residues 231-251 (IIDIIIMLLAYLAMHLTFLSL). The region spanning 233-403 (DIIIMLLAYL…FTFYISVLCV (171 aa)) is the SSD domain. At 252-261 (FMSMRQLGSR) the chain is on the cytoplasmic side. A helical transmembrane segment spans residues 262-282 (FWLAYSVLLSGFFSLFFGLKV). The Lumenal portion of the chain corresponds to 283–287 (TTSSG). The chain crosses the membrane as a helical span at residues 288–308 (VSTSMITLSECLPILVIIVGF). Residues 309–355 (EKPIRLTRAVLRAATESYLPAKPMARRSTPEAIEVAIMREGWRIVRD) lie on the Cytoplasmic side of the membrane. A helical transmembrane segment spans residues 356–375 (YAIEIAILAAGATSRVQGAL). The Lumenal portion of the chain corresponds to 376-377 (PQ). The chain crosses the membrane as a helical span at residues 378–398 (FCFLAAWILLFDSLLLFTFYI). Residues 399 to 450 (SVLCVKLEITRIRKHVEPRRALEDDDISTGNQDFDSRVFGCKVKAANISRFK) are Cytoplasmic-facing. Residues 451 to 471 (FLMVGGFVLFNVLQLSSLTYG) form a helical membrane-spanning segment. The Lumenal portion of the chain corresponds to 472 to 564 (NVRVSDWMPY…GCVLAWLEDP (93 aa)). The N-linked (GlcNAc...) asparagine glycan is linked to N484. Residues 565 to 585 (VISKWVIAALFLSLVLNSYLM) form a helical membrane-spanning segment. Topologically, residues 586 to 1062 (KAARWNLRQS…NRSKVAAKTG (477 aa)) are cytoplasmic. E744 (charge relay system) is an active-site residue. 750–756 (SASRGCK) contributes to the CoA binding site. Residues 811 to 813 (SRF) and 838 to 846 (DAMGMNMIS) each bind NADP(+). Catalysis depends on K877, which acts as the Charge relay system. CoA is bound at residue 906-908 (VLK). The active-site Charge relay system is the D953. Residue 1048–1049 (AH) coordinates CoA. H1049 functions as the Proton donor in the catalytic mechanism. NADP(+) is bound at residue 1053-1054 (NR).

It belongs to the HMG-CoA reductase family.

The protein resides in the endoplasmic reticulum membrane. It catalyses the reaction (R)-mevalonate + 2 NADP(+) + CoA = (3S)-3-hydroxy-3-methylglutaryl-CoA + 2 NADPH + 2 H(+). It functions in the pathway metabolic intermediate biosynthesis; (R)-mevalonate biosynthesis; (R)-mevalonate from acetyl-CoA: step 3/3. Functionally, HMG-CoA reductase; part of the first module of ergosterol biosynthesis pathway that includes the early steps of the pathway, conserved across all eukaryotes, and which results in the formation of mevalonate from acetyl-coenzyme A (acetyl-CoA). Hmg1 and hmg2 catalyze the reduction of hydroxymethylglutaryl-CoA (HMG-CoA) to mevalonate. The first module starts with the action of the cytosolic acetyl-CoA acetyltransferase erg10B that catalyzes the formation of acetoacetyl-CoA. The hydroxymethylglutaryl-CoA synthases erg13A and erg13B then condense acetyl-CoA with acetoacetyl-CoA to form HMG-CoA. The rate-limiting step of the early module is the reduction to mevalonate by the 3-hydroxy-3-methylglutaryl-coenzyme A (HMG-CoA) reductases hmg1 and hmg2. Mevalonate is also a precursor for the extracellular siderophore triacetylfusarinine C (TAFC). This is 3-hydroxy-3-methylglutaryl-coenzyme A reductase 2 from Aspergillus fumigatus (strain ATCC MYA-4609 / CBS 101355 / FGSC A1100 / Af293) (Neosartorya fumigata).